Reading from the N-terminus, the 357-residue chain is DNA replication and repair protein RecF (357 aa).

30–37 (GANGSGKT) is an ATP binding site.

Belongs to the RecF family.

The protein resides in the cytoplasm. Its function is as follows. The RecF protein is involved in DNA metabolism; it is required for DNA replication and normal SOS inducibility. RecF binds preferentially to single-stranded, linear DNA. It also seems to bind ATP. This is DNA replication and repair protein RecF from Salmonella paratyphi B (strain ATCC BAA-1250 / SPB7).